Here is a 366-residue protein sequence, read N- to C-terminus: Di-N-acetylchitobiase (366 aa).

The signal sequence occupies residues 1–22; that stretch reads MALCGLPEFTLLLLPLLARLSA. The region spanning 23–366 is the GH18 domain; it reads GDCPCSEAAL…EMWGALKPRL (344 aa). Glutamate 127 (proton donor) is an active-site residue. Residues asparagine 131, asparagine 177, asparagine 212, asparagine 246, and asparagine 283 are each glycosylated (N-linked (GlcNAc...) asparagine).

The protein belongs to the glycosyl hydrolase 18 family.

Its subcellular location is the lysosome. Involved in the degradation of asparagine-linked glycoproteins. Hydrolyze of N-acetyl-beta-D-glucosamine (1-4)N-acetylglucosamine chitobiose core from the reducing end of the bond, it requires prior cleavage by glycosylasparaginase. The protein is Di-N-acetylchitobiase (Ctbs) of Mus musculus (Mouse).